The sequence spans 258 residues: Alpha- and beta-fibrinogenase stejnefibrase-1 (258 aa).

The signal sequence occupies residues 1-18 (MELIRVLANLLILQLSYA). Residues 19–24 (QKSSEL) constitute a propeptide that is removed on maturation. A Peptidase S1 domain is found at 25-249 (IIGGDECNID…HLDWIQNIIA (225 aa)). Intrachain disulfides connect C31/C163, C50/C66, C98/C256, C142/C210, C174/C189, and C200/C225. Catalysis depends on H65, which acts as the Charge relay system. N103 is a glycosylation site (N-linked (GlcNAc...) asparagine). D110 serves as the catalytic Charge relay system. 4 N-linked (GlcNAc...) asparagine glycosylation sites follow: N121, N122, N154, and N170. The Charge relay system role is filled by S204.

It belongs to the peptidase S1 family. Snake venom subfamily. Monomer. In terms of tissue distribution, expressed by the venom gland.

The protein localises to the secreted. With respect to regulation, its activity is inhibited by PMSF and p-nitrophenyl-p-guanidinobenzoate (NPGB). Functionally, snake venom serine protease. Degrades concomitantly alpha- (FGA) and beta-chains of fibrinogen (FGB). The chain is Alpha- and beta-fibrinogenase stejnefibrase-1 from Trimeresurus stejnegeri (Chinese green tree viper).